Consider the following 117-residue polypeptide: Ig heavy chain V region 108A (117 aa).

Positions 1–19 (MGWSWIFLFLLSGTAGVHS) are cleaved as a signal peptide. The region spanning 20-117 (EVQLQQSGPE…EDSAVYYCAR (98 aa)) is the Ig-like domain.

The polypeptide is Ig heavy chain V region 108A (Igh-VJ558) (Mus musculus (Mouse)).